A 122-amino-acid polypeptide reads, in one-letter code: uncharacterized protein (122 aa).

2 consecutive transmembrane segments (helical) span residues 34 to 54 and 91 to 111; these read IIFL…GVLV and FVLA…FVSF.

The protein resides in the cell membrane. This is an uncharacterized protein from Mycoplasma pneumoniae (strain ATCC 29342 / M129 / Subtype 1) (Mycoplasmoides pneumoniae).